Consider the following 538-residue polypeptide: Bifunctional purine biosynthesis protein PurH (538 aa).

Positions 6 to 158 (KHIPAPDLHR…KNHAYVATVV (153 aa)) constitute an MGS-like domain.

This sequence belongs to the PurH family.

The catalysed reaction is (6R)-10-formyltetrahydrofolate + 5-amino-1-(5-phospho-beta-D-ribosyl)imidazole-4-carboxamide = 5-formamido-1-(5-phospho-D-ribosyl)imidazole-4-carboxamide + (6S)-5,6,7,8-tetrahydrofolate. The enzyme catalyses IMP + H2O = 5-formamido-1-(5-phospho-D-ribosyl)imidazole-4-carboxamide. The protein operates within purine metabolism; IMP biosynthesis via de novo pathway; 5-formamido-1-(5-phospho-D-ribosyl)imidazole-4-carboxamide from 5-amino-1-(5-phospho-D-ribosyl)imidazole-4-carboxamide (10-formyl THF route): step 1/1. It functions in the pathway purine metabolism; IMP biosynthesis via de novo pathway; IMP from 5-formamido-1-(5-phospho-D-ribosyl)imidazole-4-carboxamide: step 1/1. The polypeptide is Bifunctional purine biosynthesis protein PurH (Brucella ovis (strain ATCC 25840 / 63/290 / NCTC 10512)).